Reading from the N-terminus, the 441-residue chain is Methylenetetrahydrofolate--tRNA-(uracil-5-)-methyltransferase TrmFO (441 aa).

11–16 (GGGLAG) is an FAD binding site.

This sequence belongs to the MnmG family. TrmFO subfamily. FAD serves as cofactor.

The protein resides in the cytoplasm. It carries out the reaction uridine(54) in tRNA + (6R)-5,10-methylene-5,6,7,8-tetrahydrofolate + NADH + H(+) = 5-methyluridine(54) in tRNA + (6S)-5,6,7,8-tetrahydrofolate + NAD(+). The enzyme catalyses uridine(54) in tRNA + (6R)-5,10-methylene-5,6,7,8-tetrahydrofolate + NADPH + H(+) = 5-methyluridine(54) in tRNA + (6S)-5,6,7,8-tetrahydrofolate + NADP(+). In terms of biological role, catalyzes the folate-dependent formation of 5-methyl-uridine at position 54 (M-5-U54) in all tRNAs. In Syntrophus aciditrophicus (strain SB), this protein is Methylenetetrahydrofolate--tRNA-(uracil-5-)-methyltransferase TrmFO.